Reading from the N-terminus, the 130-residue chain is Small ribosomal subunit protein uS9 (130 aa).

Belongs to the universal ribosomal protein uS9 family.

In Bacillus licheniformis (strain ATCC 14580 / DSM 13 / JCM 2505 / CCUG 7422 / NBRC 12200 / NCIMB 9375 / NCTC 10341 / NRRL NRS-1264 / Gibson 46), this protein is Small ribosomal subunit protein uS9.